The following is an 862-amino-acid chain: Active breakpoint cluster region-related protein (862 aa).

The tract at residues 29-84 (YDAEGNEEHKNSREGSETMPYIDESPTMSPQLSARSQDSVDGVSPTPTEVLLPGGE) is disordered. A compositionally biased stretch (basic and acidic residues) spans 34–44 (NEEHKNSREGS). The segment covering 54-67 (PTMSPQLSARSQDS) has biased composition (polar residues). The DH domain occupies 93-286 (MRKLVLSGVL…QNFLSSINED (194 aa)). The PH domain occupies 303 to 462 (QLVKDGFLVE…WREAIQKLQK (160 aa)). Positions 488 to 616 (VHNVPIISHK…QSKNWHDDVI (129 aa)) constitute a C2 domain. Residues 650 to 848 (VKISVVTKRE…YYLQHPPISF (199 aa)) form the Rho-GAP domain.

Its subcellular location is the cell projection. It is found in the dendritic spine. The protein resides in the axon. The protein localises to the synapse. Its function is as follows. Protein with a unique structure having two opposing regulatory activities toward small GTP-binding proteins. The C-terminus is a GTPase-activating protein domain which stimulates GTP hydrolysis by RAC1, RAC2 and CDC42. Accelerates the intrinsic rate of GTP hydrolysis of RAC1 or CDC42, leading to down-regulation of the active GTP-bound form. The central Dbl homology (DH) domain functions as guanine nucleotide exchange factor (GEF) that modulates the GTPases CDC42, RHOA and RAC1. Promotes the conversion of CDC42, RHOA and RAC1 from the GDP-bound to the GTP-bound form. This is Active breakpoint cluster region-related protein (abr) from Xenopus laevis (African clawed frog).